We begin with the raw amino-acid sequence, 245 residues long: MLFPTPLVEGRLVKRYMRFLADVILDDGTAVTAHCANSGSMASVKEPGSPVWLSESPNPDRKLKYTWEIIRVGDAYSGVNTGTPNAVVAEAIAEGKIPPLAGYARLRREVKYGKTSRIDILLEDDAAADDAPARPRCYVEVKNVTLKRDPAWDGPIDFPDAVTTRGAKHLLELADMVDQGHRAAMVYLVQRTDGGAVAMAADIDPAYAAGLKTAIAKGVEVYCLGCEVDPLRGIWVNRALPLIAP.

The protein belongs to the SfsA family.

This is Sugar fermentation stimulation protein homolog from Rhodospirillum rubrum (strain ATCC 11170 / ATH 1.1.1 / DSM 467 / LMG 4362 / NCIMB 8255 / S1).